Reading from the N-terminus, the 524-residue chain is Strychnine-10-hydroxylase (524 aa).

Residues 6–26 (LYIHTAILGLISLFLILHFVF) traverse the membrane as a helical segment. C466 provides a ligand contact to heme.

This sequence belongs to the cytochrome P450 family. It depends on heme as a cofactor.

The protein resides in the membrane. The enzyme catalyses strychnine + reduced [NADPH--hemoprotein reductase] + O2 = 10-hydroxystrychnine + oxidized [NADPH--hemoprotein reductase] + H2O + H(+). It participates in alkaloid biosynthesis. In terms of biological role, monooxygenase involved in the biosynthesis of curare monoterpene indole alkaloids (MIAs), natural products such as strychnine, a neurotoxic compound used as a pesticide to control rodents, and its pharmacologically active derivatives, including brucine, used to regulate blood pressure. Curare alkaloids act as animal glycine receptor antagonists. Catalyzes the conversion of strychnine to 10-OH strychnine. This chain is Strychnine-10-hydroxylase, found in Strychnos nux-vomica (Poison nut).